The sequence spans 1531 residues: Myosin-17 (1531 aa).

One can recognise a Myosin N-terminal SH3-like domain in the interval 8–57; that stretch reads IVGSHVWIEDPGAAWIDGEVVKINGEEVHAHTTNGKTVVANIANVFPKDT. The Myosin motor domain maps to 62-732; it reads GGVDDMTKLS…QMAELDARRA (671 aa). Residues 156-163 and 209-217 each bind ATP; these read GESGAGKT and NNNSSRFGK. Actin-binding regions lie at residues 495-529, 531-554, 589-613, and 613-635; these read LIEKKPGGVIALLDEACMFPKSTHETFAQKLYQTF, NYKRFTKPKLSRTSFAISHYAGEV, FPRLPEETSSKTKFSSIGSRFKLQL, and LQSLMETLSSTEPHYIRCVKPNN. IQ domains follow at residues 758-787, 783-812, 806-835, 831-860, and 854-883; these read LRGAAIVLQSNCRGKLACNLYEEMRRQAAA, RQAAAVKIQKIFRRHIARESYLRIRHSTIT, IRHSTITVQTALRGMVARNEFRFRKQMKAA, QMKAATIIQARLRSHLTHSYYKQLQKAALS, and LQKAALSTQCGWRSRVARKELRTLKMAARD. A coiled-coil region spans residues 884-1056; that stretch reads TGALREAKDK…VLRQQALAIS (173 aa). The tract at residues 1071 to 1090 is disordered; the sequence is LPRTPENGNYLNGGTKTTPD. Positions 1076-1090 are enriched in polar residues; that stretch reads ENGNYLNGGTKTTPD. Residues 1159–1470 enclose the Dilute domain; that stretch reads DRIIQTIATA…IANMRVMMTE (312 aa). Ser-1517 carries the post-translational modification Phosphoserine.

It belongs to the TRAFAC class myosin-kinesin ATPase superfamily. Myosin family. Plant myosin class XI subfamily. As to quaternary structure, homodimer. Interacts with MYOB1, MYOB2 and MYOB3. Interacts with PHOX1 and PHOX2. As to expression, expressed ubiquitously.

It localises to the cytoplasm. In terms of biological role, myosin heavy chain that is required for the cell cycle-regulated transport of various organelles and proteins for their segregation. Functions by binding with its tail domain to receptor proteins on organelles and exerting force with its N-terminal motor domain against actin filaments, thereby transporting its cargo along polarized actin cables. Involved in the tip growth of root hair cells and in the elongation of trichome stalk and branches. Plays a major role in trafficking of Golgi stacks, mitochondria and peroxisomes during root hair development. Acts as the primary contributor to ER streaming with a major role in the movement of Golgi bodies. Required for development of pavement cells, trichomes, and stigmatic papillae. Together with XI-F, required for the regulation of organ bending, such as gravitropic root bending. This Arabidopsis thaliana (Mouse-ear cress) protein is Myosin-17.